Here is a 723-residue protein sequence, read N- to C-terminus: Catalase-peroxidase (723 aa).

A cross-link (tryptophyl-tyrosyl-methioninium (Trp-Tyr) (with M-238)) is located at residues 89–212; the sequence is WHSAGTYRTG…LAAVQMGLIY (124 aa). His90 acts as the Proton acceptor in catalysis. Residues 212–238 constitute a cross-link (tryptophyl-tyrosyl-methioninium (Tyr-Met) (with W-89)); that stretch reads YVNPEGPNGDPDPFAAAVDIRETFARM. Residue His253 participates in heme b binding.

It belongs to the peroxidase family. Peroxidase/catalase subfamily. As to quaternary structure, homodimer or homotetramer. It depends on heme b as a cofactor. Post-translationally, formation of the three residue Trp-Tyr-Met cross-link is important for the catalase, but not the peroxidase activity of the enzyme.

It carries out the reaction H2O2 + AH2 = A + 2 H2O. The enzyme catalyses 2 H2O2 = O2 + 2 H2O. Bifunctional enzyme with both catalase and broad-spectrum peroxidase activity. In Shewanella baltica (strain OS185), this protein is Catalase-peroxidase.